Reading from the N-terminus, the 1066-residue chain is Vinculin (1066 aa).

The interval 1–835 (MPVFHTRTIE…GAVAKVREAF (835 aa)) is N-terminal globular head. Residue Ser-97 is modified to Phosphoserine. The interval 168–208 (MTKMAKMIDERQQELTHQEHRVMLVNSMNTVKELLPVLISA) is talin-interaction. Position 173 is an N6-acetyllysine (Lys-173). A run of 3 repeats spans residues 259 to 369 (ASKD…KVEN), 370 to 479 (AARK…KTNR), and 480 to 589 (AVAN…QMQE). The 3 X 112 AA tandem repeats stretch occupies residues 259–589 (ASKDTEAMKR…LKDLKAQMQE (331 aa)). Residues Ser-260, Ser-272, Ser-275, Ser-290, Ser-346, and Ser-434 each carry the phosphoserine modification. An N6-acetyllysine modification is found at Lys-496. Position 537 is a phosphotyrosine (Tyr-537). Ser-574, Ser-579, and Ser-600 each carry phosphoserine. A phosphothreonine mark is found at Thr-604 and Thr-672. Ser-721 carries the post-translational modification Phosphoserine. The tract at residues 741–764 (MANIQPQMLVAGATSIARRANRIL) is interaction with ACTN4. A phosphoserine mark is found at Ser-795 and Ser-809. Tyr-822 is modified (phosphotyrosine). Residues 836 to 878 (QPQEPDFPPPPPDLEQLRLTDELAPPKPPLPEGEVPPPRPPPP) are linker (Pro-rich). The interval 857–887 (ELAPPKPPLPEGEVPPPRPPPPEEKDEEFPE) is disordered. The span at 860-876 (PPKPPLPEGEVPPPRPP) shows a compositional bias: pro residues. Positions 879 to 1066 (EEKDEEFPEQ…RWVRKTPWYQ (188 aa)) are C-terminal tail. Facilitates phospholipid membrane insertion regions lie at residues 935-978 (RLVR…KRIR) and 1052-1066 (AGFT…PWYQ). Tyr-1065 carries the post-translational modification Phosphotyrosine; by SRC-type Tyr-kinases.

This sequence belongs to the vinculin/alpha-catenin family. In terms of assembly, exhibits self-association properties. Part of a complex composed of THSD1, PTK2/FAK1, TLN1 and VCL. Interacts with APBB1IP, NRAP and TLN1. Interacts with SYNM. Interacts with CTNNB1 and this interaction is necessary for its localization to the cell-cell junctions and for its function in regulating cell surface expression of E-cadherin. Interacts with SORBS1. Interacts with SYNM. Interacts with CTNNA1. Binds to ACTN4; this interaction triggers conformational changes. Interacts with FLII. In terms of processing, phosphorylated; on serines, threonines and tyrosines. Phosphorylation on Tyr-1065 in activated platelets affects head-tail interactions and cell spreading but has no effect on actin binding nor on localization to focal adhesion plaques. Acetylated; mainly by myristic acid but also by a small amount of palmitic acid.

The protein resides in the cell membrane. Its subcellular location is the cell junction. The protein localises to the adherens junction. It localises to the focal adhesion. It is found in the cytoplasm. The protein resides in the cytoskeleton. Its subcellular location is the sarcolemma. The protein localises to the cell projection. It localises to the podosome. Functionally, actin filament (F-actin)-binding protein involved in cell-matrix adhesion and cell-cell adhesion. Regulates cell-surface E-cadherin expression and potentiates mechanosensing by the E-cadherin complex. May also play important roles in cell morphology and locomotion. This is Vinculin (Vcl) from Mus musculus (Mouse).